A 359-amino-acid polypeptide reads, in one-letter code: Pyruvate dehydrogenase E1 component subunit beta, mitochondrial (359 aa).

The N-terminal 30 residues, 1 to 30 (MAVVAGLVRGPLRQASGLLKRRFHRSAPAA), are a transit peptide targeting the mitochondrion. Tyr67 carries the phosphotyrosine modification. Residue Glu89 coordinates thiamine diphosphate. Residues Ile142, Ala190, Ile191, Asp193, and Asn195 each coordinate K(+). At Lys354 the chain carries N6-acetyllysine.

Heterotetramer of two PDHA1 and two PDHB subunits. The heterotetramer interacts with DLAT, and is part of the multimeric pyruvate dehydrogenase complex that contains multiple copies of pyruvate dehydrogenase (E1), dihydrolipoamide acetyltransferase (DLAT, E2) and lipoamide dehydrogenase (DLD, E3). These subunits are bound to an inner core composed of about 48 DLAT and 12 PDHX molecules. Interacts with DLAT. Thiamine diphosphate is required as a cofactor.

Its subcellular location is the mitochondrion matrix. It carries out the reaction N(6)-[(R)-lipoyl]-L-lysyl-[protein] + pyruvate + H(+) = N(6)-[(R)-S(8)-acetyldihydrolipoyl]-L-lysyl-[protein] + CO2. The pyruvate dehydrogenase complex catalyzes the overall conversion of pyruvate to acetyl-CoA and CO(2), and thereby links the glycolytic pathway to the tricarboxylic cycle. The sequence is that of Pyruvate dehydrogenase E1 component subunit beta, mitochondrial (Pdhb) from Mus musculus (Mouse).